The primary structure comprises 559 residues: SH3 domain-binding protein 2 (559 aa).

Residues 26-130 form the PH domain; it reads GVAKAGYLHK…WMAFVRREIG (105 aa). The disordered stretch occupies residues 164-449; sequence LSSYPMDNED…EDSDEDYEKV (286 aa). The span at 170–184 shows a compositional bias: acidic residues; sequence DNEDYEHEDEDDSYL. Phosphotyrosine; by SYK is present on residues Tyr-174 and Tyr-183. Residues 201–210 carry the SH3-binding motif; the sequence is PPAYPPPPVP. 2 stretches are compositionally biased toward pro residues: residues 202 to 213 and 233 to 242; these read PAYPPPPVPVPR and PLLPPPPPKR. The segment covering 252-265 has biased composition (basic and acidic residues); the sequence is EDAKDALGLRRVEP. Ser-277 is subject to Phosphoserine. Low complexity predominate over residues 313 to 327; it reads TSSVSSSTTMAVATS. Residues 360-371 are compositionally biased toward basic and acidic residues; sequence KIAEEPSPREAA. The segment covering 375 to 386 has biased composition (pro residues); sequence PVPPVAPRPPVQ. Phosphoserine is present on residues Ser-414 and Ser-425. Acidic residues predominate over residues 437-446; sequence TGEEDSDEDY. The residue at position 446 (Tyr-446) is a Phosphotyrosine; by SYK. The 99-residue stretch at 455–553 folds into the SH2 domain; sequence VFVNTTESCE…HQSLLLRHPY (99 aa).

In terms of processing, phosphorylated. Phosphorylation at Tyr-446 may stimulate the activity of the LYN kinase.

In terms of biological role, binds differentially to the SH3 domains of certain proteins of signal transduction pathways. Binds to phosphatidylinositols; linking the hemopoietic tyrosine kinase fes to the cytoplasmic membrane in a phosphorylation dependent mechanism. The polypeptide is SH3 domain-binding protein 2 (Sh3bp2) (Mus musculus (Mouse)).